A 340-amino-acid polypeptide reads, in one-letter code: Phenylalanine--tRNA ligase alpha subunit (340 aa).

Residue glutamate 255 participates in Mg(2+) binding.

Belongs to the class-II aminoacyl-tRNA synthetase family. Phe-tRNA synthetase alpha subunit type 1 subfamily. In terms of assembly, tetramer of two alpha and two beta subunits. Requires Mg(2+) as cofactor.

The protein resides in the cytoplasm. The enzyme catalyses tRNA(Phe) + L-phenylalanine + ATP = L-phenylalanyl-tRNA(Phe) + AMP + diphosphate + H(+). This is Phenylalanine--tRNA ligase alpha subunit from Heliobacterium modesticaldum (strain ATCC 51547 / Ice1).